We begin with the raw amino-acid sequence, 205 residues long: dITP/XTP pyrophosphatase (205 aa).

Residue T16–K21 coordinates substrate. Mg(2+) is bound by residues E48 and D77. The active-site Proton acceptor is D77. Substrate is bound by residues S78, F162 to D165, K185, and H190 to R191.

This sequence belongs to the HAM1 NTPase family. Homodimer. It depends on Mg(2+) as a cofactor.

The catalysed reaction is XTP + H2O = XMP + diphosphate + H(+). It carries out the reaction dITP + H2O = dIMP + diphosphate + H(+). The enzyme catalyses ITP + H2O = IMP + diphosphate + H(+). Pyrophosphatase that catalyzes the hydrolysis of nucleoside triphosphates to their monophosphate derivatives, with a high preference for the non-canonical purine nucleotides XTP (xanthosine triphosphate), dITP (deoxyinosine triphosphate) and ITP. Seems to function as a house-cleaning enzyme that removes non-canonical purine nucleotides from the nucleotide pool, thus preventing their incorporation into DNA/RNA and avoiding chromosomal lesions. This is dITP/XTP pyrophosphatase from Erwinia tasmaniensis (strain DSM 17950 / CFBP 7177 / CIP 109463 / NCPPB 4357 / Et1/99).